We begin with the raw amino-acid sequence, 322 residues long: Ferredoxin--NADP reductase (322 aa).

Asp34, Gln42, Tyr47, Val87, Phe120, Asp279, and Thr320 together coordinate FAD.

The protein belongs to the ferredoxin--NADP reductase type 2 family. As to quaternary structure, homodimer. It depends on FAD as a cofactor.

The catalysed reaction is 2 reduced [2Fe-2S]-[ferredoxin] + NADP(+) + H(+) = 2 oxidized [2Fe-2S]-[ferredoxin] + NADPH. The chain is Ferredoxin--NADP reductase from Streptococcus sanguinis (strain SK36).